We begin with the raw amino-acid sequence, 209 residues long: MGAILGKKIGMTRLFNEKREAVSCTIIQAGPCFVTQVKRADKEGYDAYQIGIGERKEKKVSKPLQGHYKKAGVAPGFKLAEFDFKELNQELELGSAVSVESFTEGEKVNVLGVSKGKGFAGVMKRHNFSGGQRTHGQSDRQRAPGSVGGSSDPSRVFKGTRMAGRMGSDNITVRNLVIFKIMPESNLIVIKGSVPGPKNSYVKIVSTKK.

The interval Lys-124–Val-156 is disordered.

It belongs to the universal ribosomal protein uL3 family. In terms of assembly, part of the 50S ribosomal subunit. Forms a cluster with proteins L14 and L19.

Functionally, one of the primary rRNA binding proteins, it binds directly near the 3'-end of the 23S rRNA, where it nucleates assembly of the 50S subunit. This chain is Large ribosomal subunit protein uL3, found in Pelodictyon phaeoclathratiforme (strain DSM 5477 / BU-1).